We begin with the raw amino-acid sequence, 105 residues long: Met repressor (105 aa).

This sequence belongs to the MetJ family. As to quaternary structure, homodimer.

It is found in the cytoplasm. In terms of biological role, this regulatory protein, when combined with SAM (S-adenosylmethionine) represses the expression of the methionine regulon and of enzymes involved in SAM synthesis. The chain is Met repressor from Photorhabdus laumondii subsp. laumondii (strain DSM 15139 / CIP 105565 / TT01) (Photorhabdus luminescens subsp. laumondii).